Reading from the N-terminus, the 202-residue chain is 3-isopropylmalate dehydratase small subunit (202 aa).

Belongs to the LeuD family. LeuD type 1 subfamily. In terms of assembly, heterodimer of LeuC and LeuD.

The catalysed reaction is (2R,3S)-3-isopropylmalate = (2S)-2-isopropylmalate. Its pathway is amino-acid biosynthesis; L-leucine biosynthesis; L-leucine from 3-methyl-2-oxobutanoate: step 2/4. Catalyzes the isomerization between 2-isopropylmalate and 3-isopropylmalate, via the formation of 2-isopropylmaleate. This chain is 3-isopropylmalate dehydratase small subunit, found in Rhizobium johnstonii (strain DSM 114642 / LMG 32736 / 3841) (Rhizobium leguminosarum bv. viciae).